Here is a 133-residue protein sequence, read N- to C-terminus: Interferon-induced transmembrane protein 3 (133 aa).

The Cytoplasmic portion of the chain corresponds to methionine 1 to histidine 57. Tyrosine 20 bears the Phosphotyrosine mark. A Glycyl lysine isopeptide (Lys-Gly) (interchain with G-Cter in ubiquitin) cross-link involves residue lysine 24. The helical intramembrane region spans valine 58–phenylalanine 78. The tract at residues tryptophan 60–valine 93 is interaction with SPP1. S-palmitoyl cysteine attachment occurs at residues cysteine 71 and cysteine 72. At alanine 79–asparagine 107 the chain is on the cytoplasmic side. Glycyl lysine isopeptide (Lys-Gly) (interchain with G-Cter in ubiquitin) cross-links involve residues lysine 83, lysine 88, and lysine 104. Residue cysteine 105 is the site of S-palmitoyl cysteine attachment. Residues isoleucine 108–isoleucine 128 form a helical membrane-spanning segment. Residues isoleucine 108 to glycine 133 are interaction with VAPA. Residues phenylalanine 129–glycine 133 lie on the Extracellular side of the membrane.

This sequence belongs to the CD225/Dispanin family. As to quaternary structure, interacts with ATP6V0B. Interacts with CD81. Interacts with SPP1; the interaction reduces OPN expression. Interacts with VAPA. Interacts with BRI3 (isoforms 1 and 2); the interaction with isoform 2 is weaker than with isoform 1. Post-translationally, palmitoylation on membrane-proximal cysteines controls clustering in membrane compartments and antiviral activity against influenza virus and hepatitis C virus (HCV). Has no effect on anti-SARS-CoV-2 activity. In terms of processing, not glycosylated. Polyubiquitinated with both 'Lys-48' and 'Lys-63' linkages. Ubiquitination negatively regulates antiviral activity. Lys-24 is the most prevalent ubiquitination site. Post-translationally, phosphorylation at Tyr-20 is required for endosomal and lysosomal location.

The protein resides in the cell membrane. It is found in the late endosome membrane. It localises to the early endosome membrane. Its subcellular location is the lysosome membrane. The protein localises to the cytoplasm. The protein resides in the perinuclear region. Functionally, IFN-induced antiviral protein which disrupts intracellular cholesterol homeostasis. Inhibits the entry of viruses to the host cell cytoplasm by preventing viral fusion with cholesterol depleted endosomes. May inactivate new enveloped viruses which buds out of the infected cell, by letting them go out with a cholesterol depleted membrane. Active against multiple viruses, including influenza A virus, SARS coronaviruses (SARS-CoV and SARS-CoV-2), Marburg virus (MARV), Ebola virus (EBOV), Dengue virus (DNV), West Nile virus (WNV), human immunodeficiency virus type 1 (HIV-1), hepatitis C virus (HCV) and vesicular stomatitis virus (VSV). Can inhibit: influenza virus hemagglutinin protein-mediated viral entry, MARV and EBOV GP1,2-mediated viral entry, SARS-CoV and SARS-CoV-2 S protein-mediated viral entry and VSV G protein-mediated viral entry. Plays a critical role in the structural stability and function of vacuolar ATPase (v-ATPase). Establishes physical contact with the v-ATPase of endosomes which is critical for proper clathrin localization and is also required for the function of the v-ATPase to lower the pH in phagocytic endosomes thus establishing an antiviral state. In hepatocytes, IFITM proteins act in a coordinated manner to restrict HCV infection by targeting the endocytosed HCV virion for lysosomal degradation. IFITM2 and IFITM3 display anti-HCV activity that may complement the anti-HCV activity of IFITM1 by inhibiting the late stages of HCV entry, possibly in a coordinated manner by trapping the virion in the endosomal pathway and targeting it for degradation at the lysosome. Exerts opposing activities on SARS-CoV-2, including amphipathicity-dependent restriction of virus at endosomes and amphipathicity-independent enhancement of infection at the plasma membrane. This is Interferon-induced transmembrane protein 3 from Homo sapiens (Human).